A 411-amino-acid polypeptide reads, in one-letter code: L-cysteine:1D-myo-inositol 2-amino-2-deoxy-alpha-D-glucopyranoside ligase (411 aa).

Cys-43 contributes to the Zn(2+) binding site. Residues Cys-43–Thr-46, Thr-58, and Asn-81–Thr-83 each bind L-cysteinyl-5'-AMP. Residues Ile-45–His-55 carry the 'HIGH' region motif. The 'ERGGDP' region motif lies at Gln-186 to Pro-191. Trp-226 provides a ligand contact to L-cysteinyl-5'-AMP. Residue Cys-230 participates in Zn(2+) binding. Gly-248–Asp-250 provides a ligand contact to L-cysteinyl-5'-AMP. His-255 contributes to the Zn(2+) binding site. Ile-282 contributes to the L-cysteinyl-5'-AMP binding site. A 'KMSKS' region motif is present at residues Lys-288–Ser-292.

It belongs to the class-I aminoacyl-tRNA synthetase family. MshC subfamily. In terms of assembly, monomer. Zn(2+) is required as a cofactor.

The catalysed reaction is 1D-myo-inositol 2-amino-2-deoxy-alpha-D-glucopyranoside + L-cysteine + ATP = 1D-myo-inositol 2-(L-cysteinylamino)-2-deoxy-alpha-D-glucopyranoside + AMP + diphosphate + H(+). Catalyzes the ATP-dependent condensation of GlcN-Ins and L-cysteine to form L-Cys-GlcN-Ins. This Mycobacterium ulcerans (strain Agy99) protein is L-cysteine:1D-myo-inositol 2-amino-2-deoxy-alpha-D-glucopyranoside ligase.